Here is a 513-residue protein sequence, read N- to C-terminus: GMP synthase [glutamine-hydrolyzing] (513 aa).

The region spanning 9-198 (MILVLDFGSQ…VRRICDCTGE (190 aa)) is the Glutamine amidotransferase type-1 domain. Catalysis depends on Cys-86, which acts as the Nucleophile. Residues His-172 and Glu-174 contribute to the active site. Positions 199–388 (WTMENFIDLE…LGIPEHLVWR (190 aa)) constitute a GMPS ATP-PPase domain. 226 to 232 (SGGVDSS) contributes to the ATP binding site.

In terms of assembly, homodimer.

It carries out the reaction XMP + L-glutamine + ATP + H2O = GMP + L-glutamate + AMP + diphosphate + 2 H(+). It participates in purine metabolism; GMP biosynthesis; GMP from XMP (L-Gln route): step 1/1. Functionally, catalyzes the synthesis of GMP from XMP. This is GMP synthase [glutamine-hydrolyzing] from Staphylococcus carnosus (strain TM300).